Reading from the N-terminus, the 126-residue chain is Precursor of CEP2 (126 aa).

Residues 1-19 (MKLFIITVVTILTISRVFD) form the signal peptide. The propeptide occupies 20 to 80 (KTPATTEARK…ENNLKNRFIN (61 aa)). Hydroxyproline occurs at positions 84 and 87. The propeptide occupies 96 to 105 (PRVLNNKFTN). Hydroxyproline occurs at positions 109, 112, and 116. Residues 121-126 (PGVVNV) constitute a propeptide that is removed on maturation.

Belongs to the C-terminally encoded plant signaling peptide (CEP) family. As to quaternary structure, interacts with CEP receptors (e.g. CEPR1 and CEPR2). Post-translationally, the mature small signaling peptide is generated by proteolytic processing of the longer precursor. In terms of tissue distribution, mostly expressed in roots. Present in cotyledons, shoot apical meristem (SAM), leaves, inflorescence stems and flowers.

It localises to the secreted. It is found in the extracellular space. Its subcellular location is the apoplast. Its function is as follows. Extracellular signaling peptide that represses primary root growth rate. Negatively regulates the number of leaves and flowering, and modulates leaf morphology. Regulates systemic nitrogen (N)-demand signaling. Mediates up-regulation of genes involved in N uptake and assimilation pathways. This Arabidopsis thaliana (Mouse-ear cress) protein is Precursor of CEP2.